The following is a 971-amino-acid chain: Exportin-2 (971 aa).

The 74-residue stretch at 29-102 (AEKFLESVEG…KANIVNLMLS (74 aa)) folds into the Importin N-terminal domain.

Belongs to the XPO2/CSE1 family. Interacts with cftr.

It localises to the cytoplasm. It is found in the nucleus. Its function is as follows. Export receptor for importin alpha. Mediates importin-alpha re-export from the nucleus to the cytoplasm after import substrates have been released into the nucleoplasm. Negatively regulates fluid secretion and plays a role in fluid homeostasis by down-regulating cftr activity. The chain is Exportin-2 (cse1l) from Pagrus major (Red sea bream).